The following is a 181-amino-acid chain: 3-hydroxyanthranilate 3,4-dioxygenase (181 aa).

Residue Arg-46 coordinates O2. Residues His-50, Glu-56, and His-95 each coordinate Fe cation. Glu-56 contributes to the substrate binding site. Substrate-binding residues include Arg-99 and Glu-109.

The protein belongs to the 3-HAO family. Fe(2+) serves as cofactor.

The protein resides in the cytoplasm. It catalyses the reaction 3-hydroxyanthranilate + O2 = (2Z,4Z)-2-amino-3-carboxymuconate 6-semialdehyde. The protein operates within cofactor biosynthesis; NAD(+) biosynthesis; quinolinate from L-kynurenine: step 3/3. Functionally, catalyzes the oxidative ring opening of 3-hydroxyanthranilate to 2-amino-3-carboxymuconate semialdehyde, which spontaneously cyclizes to quinolinate. In Mycosarcoma maydis (Corn smut fungus), this protein is 3-hydroxyanthranilate 3,4-dioxygenase.